The sequence spans 109 residues: Con-Ins K2 (109 aa).

The signal sequence occupies residues 1–24; sequence MTTSSYFLLVALGLLLYVCQSSFG. A propeptide spanning residues 25–29 is cleaved from the precursor; the sequence is NPHTR. 3 cysteine pairs are disulfide-bonded: Cys41-Cys90, Cys53-Cys103, and Cys89-Cys94. Residue Glu44 is modified to 4-carboxyglutamate. The propeptide at 57 to 83 is c peptide; that stretch reads RKRRGFPSMLKARAKRNEAFLLQRDGR.

Belongs to the insulin family. Heterodimer of A and B chains; disulfide-linked. As to expression, expressed by the venom gland.

The protein localises to the secreted. This venom insulin, from a fish-hunting cone snail, facilitates prey capture by rapidly inducing hypoglycemic shock. It is one of the smallest known insulin found in nature and lacks the C-terminal segment of the B chain that, in human insulin, mediates engagement of the insulin receptor (INSR) and assembly of the hormone's hexameric storage form. Despite lacking this segment, it both binds and activates human insulin receptor (long isoform (HIR-B)) with a moderate potency (EC(50)=373.2 nM). In vivo, intraperitoneal injection of this peptide into zebrafish lowers blood glucose with a lower potency than human insulin. In addition, when applied to water, this peptide reduces overall locomotor activity of zebrafish larvae, observed as a significant decrease in the percentage of time spent swimming and movement frequency. When tested on a mouse model of diabetes, this insulin also lowers blood glucose with a 20-fold lower potency than human insulin. This Conus kinoshitai (Kinoshita's cone) protein is Con-Ins K2.